The chain runs to 54 residues: Ovomucoid (54 aa).

A Kazal-like domain is found at 4–54 (VDCSEHPKPACTLEDRPLCGSDNKIYSNKCDFCNAVLESNGTLTLSHFGKC). Intrachain disulfides connect C6–C36, C14–C33, and C22–C54. N-linked (GlcNAc...) asparagine glycosylation occurs at N43.

The protein resides in the secreted. In Argusianus argus (Great argus), this protein is Ovomucoid.